The chain runs to 88 residues: Kunitz-type kappaPI-theraphotoxin-Hs1b (88 aa).

An N-terminal signal peptide occupies residues 1–27; sequence MGIARILSAVLFLSVLFVVTFPALLSA. Residues 28-33 constitute a propeptide that is removed on maturation; the sequence is DHHDGR. Residues 37–85 form the BPTI/Kunitz inhibitor domain; sequence CRLPSDRGRCKASFERWYFNGRTCAKFIYGGCGGNGNKFPTQEACMKRC. Cystine bridges form between Cys-37–Cys-85, Cys-46–Cys-68, and Cys-60–Cys-81.

The protein belongs to the venom Kunitz-type family. 02 (native) subfamily. As to expression, expressed by the venom gland.

The protein resides in the secreted. Functionally, serine protease inhibitor that inhibits trypsin at a molar ratio of 1:1. This chain is Kunitz-type kappaPI-theraphotoxin-Hs1b, found in Cyriopagopus schmidti (Chinese bird spider).